Here is a 187-residue protein sequence, read N- to C-terminus: RNA pyrophosphohydrolase (187 aa).

Positions 6-149 (GYRANVGIIL…KRQVYRLALT (144 aa)) constitute a Nudix hydrolase domain. The short motif at 38-59 (GGIKSGETPTQAMYRELAEETG) is the Nudix box element.

This sequence belongs to the Nudix hydrolase family. RppH subfamily. The cofactor is a divalent metal cation.

Accelerates the degradation of transcripts by removing pyrophosphate from the 5'-end of triphosphorylated RNA, leading to a more labile monophosphorylated state that can stimulate subsequent ribonuclease cleavage. The sequence is that of RNA pyrophosphohydrolase from Nitrosomonas eutropha (strain DSM 101675 / C91 / Nm57).